A 211-amino-acid polypeptide reads, in one-letter code: MGKFEVLDHPLIQHKLTMIRDKRVGTKVFRETVKEISTLMAYEVSRNMPLKDVEVETPIAKTTQKELAGKKVAIIPILRAGLGMVDGMTELIPAAKIGFIGMYRDEETLKPHEYFVKLPNDITERQLFIVDPMLATGGSAVMAIEALKKRGCQEKNMKFACLVAAPEGVKAVQEAFPDVDIYTAGLDERLNEDGYIVPGLGDAGDRLFGTK.

5-phospho-alpha-D-ribose 1-diphosphate-binding positions include R79, R104, and 131–139 (DPMLATGGS). Residues I196 and 201–203 (GDA) contribute to the uracil site. Residue D202 coordinates 5-phospho-alpha-D-ribose 1-diphosphate.

It belongs to the UPRTase family. The cofactor is Mg(2+).

It catalyses the reaction UMP + diphosphate = 5-phospho-alpha-D-ribose 1-diphosphate + uracil. It participates in pyrimidine metabolism; UMP biosynthesis via salvage pathway; UMP from uracil: step 1/1. Its activity is regulated as follows. Allosterically activated by GTP. Functionally, catalyzes the conversion of uracil and 5-phospho-alpha-D-ribose 1-diphosphate (PRPP) to UMP and diphosphate. This is Uracil phosphoribosyltransferase from Limosilactobacillus fermentum (strain NBRC 3956 / LMG 18251) (Lactobacillus fermentum).